The sequence spans 545 residues: T-complex protein 1 subunit alpha (545 aa).

Residue Ser2 is modified to N-acetylserine.

Belongs to the TCP-1 chaperonin family. As to quaternary structure, heterooligomeric complex of about 850 to 900 kDa that forms two stacked rings, 12 to 16 nm in diameter.

It is found in the cytoplasm. Its function is as follows. Molecular chaperone; assists the folding of proteins upon ATP hydrolysis. Known to play a role, in vitro, in the folding of actin and tubulin. In Arabidopsis thaliana (Mouse-ear cress), this protein is T-complex protein 1 subunit alpha.